The sequence spans 663 residues: ATP-dependent zinc metalloprotease FtsH (663 aa).

Over 1-12 (MNKKETNTSWWR) the chain is Stromal. The chain crosses the membrane as a helical span at residues 13–33 (IILISLGISIICILAAFLAMK). The Lumenal portion of the chain corresponds to 34-135 (DGFFVLENNT…HPPKLDIFKT (102 aa)). Residues 136–156 (ISDTLGSLIVPGLVVAVFYLF) traverse the membrane as a helical segment. The Stromal segment spans residues 157 to 663 (LERANNNNNN…KIYESKFPKK (507 aa)). Residues 165–184 (NNNSNGSPFGPGGGPNQNMR) form a disordered region. 244–251 (GPPGTGKT) lines the ATP pocket. His-465 provides a ligand contact to Zn(2+). Glu-466 is an active-site residue. His-469 and Asp-543 together coordinate Zn(2+).

In the central section; belongs to the AAA ATPase family. The protein in the C-terminal section; belongs to the peptidase M41 family. Homohexamer. The cofactor is Zn(2+).

It is found in the plastid. Its subcellular location is the chloroplast thylakoid membrane. Its function is as follows. Acts as a processive, ATP-dependent zinc metallopeptidase. This is ATP-dependent zinc metalloprotease FtsH from Heterosigma akashiwo (strain NIES-293 / 8280G21-1).